We begin with the raw amino-acid sequence, 721 residues long: MNTSTSGKCPVMHGSMTTAERSVTEWWPNALNLDILHQHDTKPNPMGKDFDYREELKKLDVAALKKDLQALMTDSQDWWPADWGHYGGLMIRMAWHSAGSYRLFDGRGGGGTGNQRFAPLNSWPDNGNLDKARRLLWPIKKKYGNKLSWADLYILAGNVAYESMGLKTFGFAFGREDIWHPEKDVYWGSEKEWLAESVLRYANEEDPESLEAPLGAVHMGLIYVNPQGRDGKPDPLKSAHDVRVTFKRMAMNDEETAALTAGGHTVGKAHGNGLESNLSAPPEAADIEEQGFGWVNHKTRGVGRDTVTSGLEGAWTSKPTTFDMGYFDMLFGHEWELKKSPAGAWQWQPIDIKEEDMPVDVEDPSIRRMPIMTDADMAMKVDPIYREICERFRKDPEYFKDTFARAWFKLTHRDMGPKVRYVGPEVPAEDLIWQDPIPAGNTSYDVGAVKAKIAASGLSVSELVSTAWDSARTYRGSDMRGGANGARIRLAPQKDWVGNEPERLKKVLSMLEPIAKATGASLADVIVLAGNVGVEQAAKAAGFDIAVPFAPGRGDASAEQTDAESFEALEPLADAYRNFLKRDYELPPEELMLDRTQLMGLTGPEMTVLVGGMRVMGTNHGGTRHGVFTDREGALTNDFFVNLTDMGNSWVKNGGHYDVRDRKTGKTKWTATRVDLVFGSNSILRAYSEVYAQDDAKEKFVKDFVAAWTKVMNADRFDLKK.

Positions 95-223 form a cross-link, tryptophyl-tyrosyl-methioninium (Trp-Tyr) (with M-249); sequence WHSAGSYRLF…LGAVHMGLIY (129 aa). Histidine 96 (proton acceptor) is an active-site residue. A cross-link (tryptophyl-tyrosyl-methioninium (Tyr-Met) (with W-95)) is located at residues 223 to 249; sequence YVNPQGRDGKPDPLKSAHDVRVTFKRM. Residue histidine 264 participates in heme b binding.

It belongs to the peroxidase family. Peroxidase/catalase subfamily. Homodimer or homotetramer. It depends on heme b as a cofactor. Post-translationally, formation of the three residue Trp-Tyr-Met cross-link is important for the catalase, but not the peroxidase activity of the enzyme.

The enzyme catalyses H2O2 + AH2 = A + 2 H2O. It catalyses the reaction 2 H2O2 = O2 + 2 H2O. In terms of biological role, bifunctional enzyme with both catalase and broad-spectrum peroxidase activity. This Parvibaculum lavamentivorans (strain DS-1 / DSM 13023 / NCIMB 13966) protein is Catalase-peroxidase.